The chain runs to 214 residues: Guanylate kinase (214 aa).

Residues 6 to 192 enclose the Guanylate kinase-like domain; sequence GTLYIISAPS…ALEDLKAIFR (187 aa). 13–20 serves as a coordination point for ATP; sequence APSGAGKT.

The protein belongs to the guanylate kinase family.

It is found in the cytoplasm. It carries out the reaction GMP + ATP = GDP + ADP. Functionally, essential for recycling GMP and indirectly, cGMP. The protein is Guanylate kinase of Pseudomonas syringae pv. syringae (strain B728a).